An 830-amino-acid polypeptide reads, in one-letter code: ATP-dependent DNA helicase chl-1 (830 aa).

Residues 1–403 (MDEFSFPFQP…HNLLYMKQLE (403 aa)) form the Helicase ATP-binding domain. Position 35–42 (35–42 (SPTGTGKS)) interacts with ATP. Basic and acidic residues-rich tracts occupy residues 124–140 (GMVEVSRKRKAPARDTD) and 157–168 (NDEKSEKQRDSD). Positions 124–173 (GMVEVSRKRKAPARDTDQFLEPQDEAAPSEEYNNDEKSEKQRDSDFFDDV) are disordered. [4Fe-4S] cluster contacts are provided by Cys-222, Cys-240, Cys-272, and Cys-308. The DEAH box motif lies at 351–354 (DEAH).

This sequence belongs to the DEAD box helicase family. DEAH subfamily. DDX11/CHL1 sub-subfamily. The cofactor is [4Fe-4S] cluster.

Its subcellular location is the nucleus. It carries out the reaction Couples ATP hydrolysis with the unwinding of duplex DNA at the replication fork by translocating in the 5'-3' direction. This creates two antiparallel DNA single strands (ssDNA). The leading ssDNA polymer is the template for DNA polymerase III holoenzyme which synthesizes a continuous strand.. The enzyme catalyses ATP + H2O = ADP + phosphate + H(+). In terms of biological role, required for normal cell proliferation and chromosome stability. Plays a role in DNA repair during replication. The polypeptide is ATP-dependent DNA helicase chl-1 (Caenorhabditis elegans).